We begin with the raw amino-acid sequence, 735 residues long: E3 ubiquitin-protein ligase SH3RF2 (735 aa).

The segment at 12–53 (CPVCFEKLDVTAKVLPCQHTFCKPCLQRIFKAHKELRCPECR) adopts an RING-type zinc-finger fold. SH3 domains follow at residues 125 to 184 (DGVP…VIKQ) and 187 to 252 (QPPP…PNLS). Disordered regions lie at residues 260 to 301 (SKGH…GSGQ) and 335 to 373 (TSPS…STAM). Residues 273–289 (LMSSPSRGKATNTSTLR) show a composition bias toward polar residues. Residues 373–466 (MVSVPSSQQH…RHPTVCTTWA (94 aa)) are interaction with PAK4. Residues 383-444 (LSTNMFVALH…PSDYVIPVFS (62 aa)) form the SH3 3 domain. Disordered stretches follow at residues 472–534 (VSSQ…PVQS), 612–637 (ETPI…KPEN), and 649–735 (VRFQ…FPSK). The segment covering 523-534 (RKNGSLQRPVQS) has biased composition (polar residues). A compositionally biased stretch (pro residues) spans 617-627 (SEPPPKPPASA). The interaction with PPP1CA stretch occupies residues 647–652 (KTVRFQ). S655 carries the post-translational modification Phosphoserine. Over residues 715–735 (FSKTTPPVSTASVSQTLFPSK) the composition is skewed to polar residues.

The protein belongs to the SH3RF family. As to quaternary structure, interacts with FASLG and PPP1CA. Interacts with PAK4 and TNFRSF1A. Interacts with DLK1, MAP3K10, MAPK8IP1/JIP1, MAPK8IP2/JIP2 and MAPK8IP3/JIP3. Interacts with RAC1 (both active GTP- or inactive GDP-bound forms). Autoubiquitinated.

The protein localises to the nucleus. It carries out the reaction S-ubiquitinyl-[E2 ubiquitin-conjugating enzyme]-L-cysteine + [acceptor protein]-L-lysine = [E2 ubiquitin-conjugating enzyme]-L-cysteine + N(6)-ubiquitinyl-[acceptor protein]-L-lysine.. The protein operates within protein modification; protein ubiquitination. Functionally, has E3 ubiquitin-protein ligase activity. Acts as an anti-apoptotic regulator of the JNK pathway by ubiquitinating and promoting the degradation of SH3RF1, a scaffold protein that is required for pro-apoptotic JNK activation. Facilitates TNF-alpha-mediated recruitment of adapter proteins TRADD and RIPK1 to TNFRSF1A and regulates PAK4 protein stability via inhibition of its ubiquitin-mediated proteasomal degradation. Inhibits PPP1CA phosphatase activity. The sequence is that of E3 ubiquitin-protein ligase SH3RF2 (Sh3rf2) from Rattus norvegicus (Rat).